A 552-amino-acid chain; its full sequence is Serine protease 53 (552 aa).

Positions 1-23 (MRQSWRPELLIVGAVVVIEGLQA) are cleaved as a signal peptide. Peptidase S1 domains follow at residues 24-273 (AQRA…AHVH) and 294-525 (VACG…NLDW). The segment at 27–46 (ACGQRGPGPPEPQEGNTLPG) is disordered. Cysteines 62 and 78 form a disulfide. Active-site charge relay system residues include His-77 and Asp-128. Cystine bridges form between Cys-158–Cys-230, Cys-187–Cys-209, Cys-220–Cys-249, and Cys-326–Cys-342. Active-site charge relay system residues include Ser-224, His-341, and Asp-382. Disulfide bonds link Cys-443-Cys-463 and Cys-473-Cys-501. Ser-477 functions as the Charge relay system in the catalytic mechanism.

This sequence belongs to the peptidase S1 family.

It is found in the secreted. Its function is as follows. In vitro can degrade the fibrinogen alpha chain of as well as pro-urokinase-type plasminogen activator. The sequence is that of Serine protease 53 (Prss53) from Mus musculus (Mouse).